Reading from the N-terminus, the 398-residue chain is Argininosuccinate synthase (398 aa).

ATP is bound by residues 9-17 (AYSGGVDTS) and alanine 37. Tyrosine 88 contacts L-citrulline. Glycine 118 serves as a coordination point for ATP. Positions 120, 124, and 125 each coordinate L-aspartate. Residue asparagine 124 coordinates L-citrulline. Positions 128, 176, 185, 261, and 273 each coordinate L-citrulline.

This sequence belongs to the argininosuccinate synthase family. Type 1 subfamily. In terms of assembly, homotetramer.

Its subcellular location is the cytoplasm. The enzyme catalyses L-citrulline + L-aspartate + ATP = 2-(N(omega)-L-arginino)succinate + AMP + diphosphate + H(+). Its pathway is amino-acid biosynthesis; L-arginine biosynthesis; L-arginine from L-ornithine and carbamoyl phosphate: step 2/3. This is Argininosuccinate synthase from Gloeobacter violaceus (strain ATCC 29082 / PCC 7421).